Here is a 515-residue protein sequence, read N- to C-terminus: BURP domain-containing protein 9 (515 aa).

A signal peptide spans 1 to 29 (MKATGGPLPLILFLLIIIVLITAQHTAIA). Positions 292 to 507 (YFFEDNLAPG…GRGSIIWVPV (216 aa)) constitute a BURP domain. N-linked (GlcNAc...) asparagine glycans are attached at residues asparagine 321, asparagine 332, and asparagine 470.

As to expression, expressed in shoot and panicles.

This Oryza sativa subsp. japonica (Rice) protein is BURP domain-containing protein 9 (BURP9).